Consider the following 130-residue polypeptide: Small ribosomal subunit protein uS11 (130 aa).

This sequence belongs to the universal ribosomal protein uS11 family. As to quaternary structure, part of the 30S ribosomal subunit.

In terms of biological role, located on the platform of the 30S subunit. This is Small ribosomal subunit protein uS11 from Ignicoccus hospitalis (strain KIN4/I / DSM 18386 / JCM 14125).